The sequence spans 157 residues: SsrA-binding protein (157 aa).

Residues 126–157 (GLGKGKQAHDKREAVKERDWQRDRARLMRDRG) form a disordered region. Residues 132-157 (QAHDKREAVKERDWQRDRARLMRDRG) are compositionally biased toward basic and acidic residues.

The protein belongs to the SmpB family.

The protein localises to the cytoplasm. Functionally, required for rescue of stalled ribosomes mediated by trans-translation. Binds to transfer-messenger RNA (tmRNA), required for stable association of tmRNA with ribosomes. tmRNA and SmpB together mimic tRNA shape, replacing the anticodon stem-loop with SmpB. tmRNA is encoded by the ssrA gene; the 2 termini fold to resemble tRNA(Ala) and it encodes a 'tag peptide', a short internal open reading frame. During trans-translation Ala-aminoacylated tmRNA acts like a tRNA, entering the A-site of stalled ribosomes, displacing the stalled mRNA. The ribosome then switches to translate the ORF on the tmRNA; the nascent peptide is terminated with the 'tag peptide' encoded by the tmRNA and targeted for degradation. The ribosome is freed to recommence translation, which seems to be the essential function of trans-translation. The sequence is that of SsrA-binding protein from Methylobacterium radiotolerans (strain ATCC 27329 / DSM 1819 / JCM 2831 / NBRC 15690 / NCIMB 10815 / 0-1).